The primary structure comprises 199 residues: Riboflavin synthase (199 aa).

Lumazine-binding repeat units follow at residues 1–95 (MFSG…IGGH) and 96–188 (FVSG…VDTI). 2,4-dihydroxypteridine-binding positions include 4–6 (GII), 46–48 (CLT), 60–65 (DVTEET), 99–101 (GHV), Lys-130, 139–141 (SLT), and 153–158 (SLIPET).

In terms of assembly, homotrimer.

The enzyme catalyses 2 6,7-dimethyl-8-(1-D-ribityl)lumazine + H(+) = 5-amino-6-(D-ribitylamino)uracil + riboflavin. It participates in cofactor biosynthesis; riboflavin biosynthesis; riboflavin from 2-hydroxy-3-oxobutyl phosphate and 5-amino-6-(D-ribitylamino)uracil: step 2/2. In terms of biological role, catalyzes the dismutation of two molecules of 6,7-dimethyl-8-ribityllumazine, resulting in the formation of riboflavin and 5-amino-6-(D-ribitylamino)uracil. The polypeptide is Riboflavin synthase (ribE) (Chlamydia trachomatis serovar D (strain ATCC VR-885 / DSM 19411 / UW-3/Cx)).